A 246-amino-acid polypeptide reads, in one-letter code: MFQLPILNFSPQQVAGVCETLEESGDVERLGRFLWSLPVAPAACEALNKNESVLRARAIVAFHGGNYRELYHILENHKFTKESHAKLQALWLEAHYQEAEKLRGRPLGPVDKYRVRKKFPLPRTIWDGEQKTHCFKERTRHLLREWYLQDPYPNPSKKRELAQATGLTPTQVGNWFKNRRQRDRAAAAKNRLQQQVLSQGPGRVLRSEGEGTPEVLGVASSPAASLSSKAATSAISITSSDSECDI.

The segment at residues 126 to 186 is a DNA-binding region (homeobox); that stretch reads WDGEQKTHCF…KNRRQRDRAA (61 aa). The segment at 190–246 is disordered; sequence NRLQQQVLSQGPGRVLRSEGEGTPEVLGVASSPAASLSSKAATSAISITSSDSECDI. Position 212 is a phosphothreonine (T212). The span at 219–246 shows a compositional bias: low complexity; that stretch reads ASSPAASLSSKAATSAISITSSDSECDI. A phosphoserine mark is found at S221, S225, S227, and S228.

The protein belongs to the SIX/Sine oculis homeobox family. Interacts with TLE4 and TLE5. In the developing embryo, expressed mainly in the ventral optic stalk, optic chiasma, the neural retina and the primordial tissues that give rise to the pituitary/hypothalamus axis. Not expressed in the lens placode.

It localises to the nucleus. Its function is as follows. May be involved in eye development. This chain is Homeobox protein SIX6 (Six6), found in Mus musculus (Mouse).